A 296-amino-acid polypeptide reads, in one-letter code: Cytidine deaminase (296 aa).

CMP/dCMP-type deaminase domains lie at 47–167 (SQDE…FGPA) and 186–296 (ESAD…VDPV). 88-90 (NLE) contributes to the substrate binding site. His-101 is a binding site for Zn(2+). Glu-103 functions as the Proton donor in the catalytic mechanism. Cys-128 and Cys-131 together coordinate Zn(2+).

This sequence belongs to the cytidine and deoxycytidylate deaminase family. Homodimer. It depends on Zn(2+) as a cofactor.

It catalyses the reaction cytidine + H2O + H(+) = uridine + NH4(+). The catalysed reaction is 2'-deoxycytidine + H2O + H(+) = 2'-deoxyuridine + NH4(+). This enzyme scavenges exogenous and endogenous cytidine and 2'-deoxycytidine for UMP synthesis. The chain is Cytidine deaminase from Shewanella loihica (strain ATCC BAA-1088 / PV-4).